A 370-amino-acid chain; its full sequence is Aldo-keto reductase NECHADRAFT_45914 (370 aa).

NADP(+) is bound at residue Asp-78. Tyr-83 serves as the catalytic Proton donor. His-174 is a substrate binding site. NADP(+)-binding positions include 204-205, Gln-230, 259-269, and 333-341; these read SS, APLASGRLARR, and STVQRIEEA.

Belongs to the aldo/keto reductase family.

It participates in secondary metabolite biosynthesis. Functionally, aldo-keto reductase; part of the gene cluster that mediates the biosynthesis of sansalvamide, a cyclic pentadepsipeptide that shows promising results as potential anti-cancer drug. The nonribosmal peptide synthetase NRPS30 produces sansalvamide by incorporating successively one phenylalanine, one leucine, one alpha-hydroxyisocaproic acid (HICA), one valine and one leucine before sansalvamide is released from by cyclization by the terminal C domain of NRPS30. The HICA residue is probably provided by reduction of alpha-ketoisocaproate by the cluster-specific aldo-keto reductase (NECHADRAFT_45914). This Fusarium vanettenii (strain ATCC MYA-4622 / CBS 123669 / FGSC 9596 / NRRL 45880 / 77-13-4) (Fusarium solani subsp. pisi) protein is Aldo-keto reductase NECHADRAFT_45914.